The sequence spans 156 residues: ATP synthase subunit b (156 aa).

The chain crosses the membrane as a helical span at residues 11–31; the sequence is AIAFILFVWFCMKYVWPPLMA.

It belongs to the ATPase B chain family. As to quaternary structure, F-type ATPases have 2 components, F(1) - the catalytic core - and F(0) - the membrane proton channel. F(1) has five subunits: alpha(3), beta(3), gamma(1), delta(1), epsilon(1). F(0) has three main subunits: a(1), b(2) and c(10-14). The alpha and beta chains form an alternating ring which encloses part of the gamma chain. F(1) is attached to F(0) by a central stalk formed by the gamma and epsilon chains, while a peripheral stalk is formed by the delta and b chains.

It localises to the cell inner membrane. F(1)F(0) ATP synthase produces ATP from ADP in the presence of a proton or sodium gradient. F-type ATPases consist of two structural domains, F(1) containing the extramembraneous catalytic core and F(0) containing the membrane proton channel, linked together by a central stalk and a peripheral stalk. During catalysis, ATP synthesis in the catalytic domain of F(1) is coupled via a rotary mechanism of the central stalk subunits to proton translocation. Its function is as follows. Component of the F(0) channel, it forms part of the peripheral stalk, linking F(1) to F(0). The sequence is that of ATP synthase subunit b from Enterobacter sp. (strain 638).